The sequence spans 741 residues: Pentatricopeptide repeat-containing protein At1g05670, mitochondrial (741 aa).

The N-terminal 21 residues, 1–21 (MKKPFTGLLMKRGTLSSFRNF), are a transit peptide targeting the mitochondrion. PPR repeat units lie at residues 174–208 (DPRVFDVFFQVLVDFGLLREARRVFEKMLNYGLVL), 209–244 (SVDSCNVYLTRLSKDCYKTATAIIVFREFPEVGVCW), 245–279 (NVASYNIVIHFVCQLGRIKEAHHLLLLMELKGYTP), 280–314 (DVISYSTVVNGYCRFGELDKVWKLIEVMKRKGLKP), 315–349 (NSYIYGSIIGLLCRICKLAEAEEAFSEMIRQGILP), 350–384 (DTVVYTTLIDGFCKRGDIRAASKFFYEMHSRDITP), 385–419 (DVLTYTAIISGFCQIGDMVEAGKLFHEMFCKGLEP), 420–454 (DSVTFTELINGYCKAGHMKDAFRVHNHMIQAGCSP), 455–489 (NVVTYTTLIDGLCKEGDLDSANELLHEMWKIGLQP), 490–524 (NIFTYNSIVNGLCKSGNIEEAVKLVGEFEAAGLNA), 525–559 (DTVTYTTLMDAYCKSGEMDKAQEILKEMLGKGLQP), 560–594 (TIVTFNVLMNGFCLHGMLEDGEKLLNWMLAKGIAP), 595–629 (NATTFNSLVKQYCIRNNLKAATAIYKDMCSRGVGP), 630–664 (DGKTYENLVKGHCKARNMKEAWFLFQEMKGKGFSV), and 665–699 (SVSTYSVLIKGFLKRKKFLEAREVFDQMRREGLAA).

Belongs to the PPR family. P subfamily.

It is found in the mitochondrion. In Arabidopsis thaliana (Mouse-ear cress), this protein is Pentatricopeptide repeat-containing protein At1g05670, mitochondrial.